The sequence spans 237 residues: Ribonuclease PH (237 aa).

Residues Arg-86 and 124–126 (GTR) each bind phosphate.

It belongs to the RNase PH family. Homohexameric ring arranged as a trimer of dimers.

It catalyses the reaction tRNA(n+1) + phosphate = tRNA(n) + a ribonucleoside 5'-diphosphate. Its function is as follows. Phosphorolytic 3'-5' exoribonuclease that plays an important role in tRNA 3'-end maturation. Removes nucleotide residues following the 3'-CCA terminus of tRNAs; can also add nucleotides to the ends of RNA molecules by using nucleoside diphosphates as substrates, but this may not be physiologically important. Probably plays a role in initiation of 16S rRNA degradation (leading to ribosome degradation) during starvation. This Xanthobacter autotrophicus (strain ATCC BAA-1158 / Py2) protein is Ribonuclease PH.